Consider the following 173-residue polypeptide: NADH-quinone oxidoreductase subunit B 1 (173 aa).

Residues cysteine 42, cysteine 43, cysteine 107, and cysteine 137 each contribute to the [4Fe-4S] cluster site.

Belongs to the complex I 20 kDa subunit family. As to quaternary structure, NDH-1 is composed of 14 different subunits. Subunits NuoB, C, D, E, F, and G constitute the peripheral sector of the complex. [4Fe-4S] cluster serves as cofactor.

It localises to the cell inner membrane. It carries out the reaction a quinone + NADH + 5 H(+)(in) = a quinol + NAD(+) + 4 H(+)(out). NDH-1 shuttles electrons from NADH, via FMN and iron-sulfur (Fe-S) centers, to quinones in the respiratory chain. The immediate electron acceptor for the enzyme in this species is believed to be ubiquinone. Couples the redox reaction to proton translocation (for every two electrons transferred, four hydrogen ions are translocated across the cytoplasmic membrane), and thus conserves the redox energy in a proton gradient. This chain is NADH-quinone oxidoreductase subunit B 1, found in Anaeromyxobacter sp. (strain K).